A 700-amino-acid chain; its full sequence is Elongation factor G 2 (700 aa).

The region spanning 8-290 is the tr-type G domain; it reads ERYRNIGISA…AVIDFLPSPV (283 aa). GTP is bound by residues 17–24, 88–92, and 142–145; these read AHIDAGKT, DTPGH, and NKMD.

It belongs to the TRAFAC class translation factor GTPase superfamily. Classic translation factor GTPase family. EF-G/EF-2 subfamily.

The protein localises to the cytoplasm. Functionally, catalyzes the GTP-dependent ribosomal translocation step during translation elongation. During this step, the ribosome changes from the pre-translocational (PRE) to the post-translocational (POST) state as the newly formed A-site-bound peptidyl-tRNA and P-site-bound deacylated tRNA move to the P and E sites, respectively. Catalyzes the coordinated movement of the two tRNA molecules, the mRNA and conformational changes in the ribosome. The polypeptide is Elongation factor G 2 (Burkholderia orbicola (strain AU 1054)).